Here is a 95-residue protein sequence, read N- to C-terminus: MAIKAGEEVIFTVPIKKIKKIVPRWKRAPRAVKFVREFVARHAKAQEVIIDPKVNEKIWERGIEKPPSKLRVKVKVEEEKREGEETVRIAYVTLA.

Belongs to the eukaryotic ribosomal protein eL31 family. In terms of assembly, part of the 50S ribosomal subunit.

This is Large ribosomal subunit protein eL31 from Pyrococcus furiosus (strain ATCC 43587 / DSM 3638 / JCM 8422 / Vc1).